The following is a 475-amino-acid chain: 1,3-beta-glucanosyltransferase gel2 (475 aa).

The signal sequence occupies residues 1–21; it reads MLPTYVRLFTAVCALATTASA. The cysteines at positions 69 and 98 are disulfide-linked. (1,3-beta-D-glucosyl)n is bound by residues tyrosine 87, asparagine 159, glutamate 160, and aspartate 201. Residue glutamate 160 is the Proton donor of the active site. 2 disulfide bridges follow: cysteine 215-cysteine 350 and cysteine 234-cysteine 265. The N-linked (GlcNAc...) asparagine glycan is linked to asparagine 236. The active-site Nucleophile is glutamate 262. Residue tyrosine 294 participates in (1,3-beta-D-glucosyl)n binding. N-linked (GlcNAc...) asparagine glycans are attached at residues asparagine 311, asparagine 339, and asparagine 357. Positions 420–451 are disordered; sequence GESNTPGAHSSGSTSGSSSSGGSSSSSSDKES. Over residues 429-446 the composition is skewed to low complexity; sequence SSGSTSGSSSSGGSSSSS. A lipid anchor (GPI-like-anchor amidated serine) is attached at serine 451. Positions 452–475 are cleaved as a propeptide — removed in mature form; that stretch reads AAGTISVPFVGLLSAASFMAFFML.

It belongs to the glycosyl hydrolase 72 family. The GPI-like anchor contains a phosphoceramide lipid group.

It is found in the cell membrane. Splits internally a 1,3-beta-glucan molecule and transfers the newly generated reducing end (the donor) to the non-reducing end of another 1,3-beta-glucan molecule (the acceptor) forming a 1,3-beta linkage, resulting in the elongation of 1,3-beta-glucan chains in the cell wall. Involved in cell wall morphogenesis. This Aspergillus fumigatus (strain CBS 144.89 / FGSC A1163 / CEA10) (Neosartorya fumigata) protein is 1,3-beta-glucanosyltransferase gel2 (gel2).